Here is a 375-residue protein sequence, read N- to C-terminus: Histidine biosynthesis bifunctional protein HisB (375 aa).

Residues 1-168 (MTPIVFIDRD…GIAHTLADAP (168 aa)) are histidinol-phosphatase. Asp8 serves as the catalytic Nucleophile. Asp8, Asp10, and Asp128 together coordinate Mg(2+). Asp10 functions as the Proton donor in the catalytic mechanism. Residues 169–375 (RRAVVQRHTK…HVLPSTKGAL (207 aa)) are imidazoleglycerol-phosphate dehydratase.

This sequence in the N-terminal section; belongs to the histidinol-phosphatase family. In the C-terminal section; belongs to the imidazoleglycerol-phosphate dehydratase family. The cofactor is Mg(2+).

The protein localises to the cytoplasm. It catalyses the reaction D-erythro-1-(imidazol-4-yl)glycerol 3-phosphate = 3-(imidazol-4-yl)-2-oxopropyl phosphate + H2O. The enzyme catalyses L-histidinol phosphate + H2O = L-histidinol + phosphate. Its pathway is amino-acid biosynthesis; L-histidine biosynthesis; L-histidine from 5-phospho-alpha-D-ribose 1-diphosphate: step 6/9. The protein operates within amino-acid biosynthesis; L-histidine biosynthesis; L-histidine from 5-phospho-alpha-D-ribose 1-diphosphate: step 8/9. The sequence is that of Histidine biosynthesis bifunctional protein HisB from Xylella fastidiosa (strain Temecula1 / ATCC 700964).